The primary structure comprises 703 residues: Histone-lysine N-methyltransferase SETDB2 (703 aa).

The 71-residue stretch at 178-248 (FTKGNPLQLP…DNFSFNNHVR (71 aa)) folds into the MBD domain. Residues 310 to 384 (KCCNCTDGCL…LCQNRVVQHG (75 aa)) form the Pre-SET domain. Residues Cys312, Cys314, Cys318, Cys324, Cys326, Cys365, Cys369, Cys371, and Cys376 each coordinate Zn(2+). One can recognise an SET domain in the interval 387–678 (LRLQVFKTNT…AGTELTWDYS (292 aa)). 397-399 (KGW) provides a ligand contact to S-adenosyl-L-methionine. A disordered region spans residues 492–588 (TFSPRQARSG…SSSVISGGHP (97 aa)). Basic residues predominate over residues 511-525 (RRPKTKTSMLQKRRR). Polar residues predominate over residues 550 to 560 (PEQKSSAGTKI). Positions 571 to 586 (SGYVSEESSSSVISGG) are enriched in low complexity. S-adenosyl-L-methionine-binding positions include Arg632 and 635 to 636 (NH). Zn(2+) is bound by residues Cys638, Cys691, Cys693, and Cys698.

It belongs to the class V-like SAM-binding methyltransferase superfamily.

It is found in the nucleus. The protein resides in the chromosome. The enzyme catalyses N(6),N(6)-dimethyl-L-lysyl(9)-[histone H3] + S-adenosyl-L-methionine = N(6),N(6),N(6)-trimethyl-L-lysyl(9)-[histone H3] + S-adenosyl-L-homocysteine + H(+). Histone methyltransferase involved in left-right axis specification in early development and mitosis. Specifically trimethylates 'Lys-9' of histone H3 (H3K9me3). H3K9me3 is a specific tag for epigenetic transcriptional repression that recruits HP1 (CBX1, CBX3 and/or CBX5) proteins to methylated histones. Contributes to H3K9me3 in both the interspersed repetitive elements and centromere-associated repeats. Plays a role in chromosome condensation and segregation during mitosis. The sequence is that of Histone-lysine N-methyltransferase SETDB2 (setdb2) from Xenopus laevis (African clawed frog).